The primary structure comprises 365 residues: UDP-N-acetylglucosamine--N-acetylmuramyl-(pentapeptide) pyrophosphoryl-undecaprenol N-acetylglucosamine transferase (365 aa).

UDP-N-acetyl-alpha-D-glucosamine-binding positions include 11 to 13 (TGG), Asn124, Arg165, Ser192, Ile246, and Gln291.

Belongs to the glycosyltransferase 28 family. MurG subfamily.

Its subcellular location is the cell inner membrane. The enzyme catalyses di-trans,octa-cis-undecaprenyl diphospho-N-acetyl-alpha-D-muramoyl-L-alanyl-D-glutamyl-meso-2,6-diaminopimeloyl-D-alanyl-D-alanine + UDP-N-acetyl-alpha-D-glucosamine = di-trans,octa-cis-undecaprenyl diphospho-[N-acetyl-alpha-D-glucosaminyl-(1-&gt;4)]-N-acetyl-alpha-D-muramoyl-L-alanyl-D-glutamyl-meso-2,6-diaminopimeloyl-D-alanyl-D-alanine + UDP + H(+). The protein operates within cell wall biogenesis; peptidoglycan biosynthesis. Its function is as follows. Cell wall formation. Catalyzes the transfer of a GlcNAc subunit on undecaprenyl-pyrophosphoryl-MurNAc-pentapeptide (lipid intermediate I) to form undecaprenyl-pyrophosphoryl-MurNAc-(pentapeptide)GlcNAc (lipid intermediate II). This Nitratidesulfovibrio vulgaris (strain DP4) (Desulfovibrio vulgaris) protein is UDP-N-acetylglucosamine--N-acetylmuramyl-(pentapeptide) pyrophosphoryl-undecaprenol N-acetylglucosamine transferase.